Here is a 433-residue protein sequence, read N- to C-terminus: ACT domain-containing protein ACR6 (433 aa).

ACT domains lie at 30–110 (VIQV…RSSV), 120–207 (SIEL…SCSD), 250–326 (VVTM…ASEG), and 328–402 (ELEL…VKKK).

May bind amino acids. The sequence is that of ACT domain-containing protein ACR6 from Arabidopsis thaliana (Mouse-ear cress).